Consider the following 846-residue polypeptide: Exonuclease 1 (846 aa).

Positions 1 to 99 (MGIQGLLQFI…RSRRERRQAN (99 aa)) are N-domain. Mg(2+) is bound by residues Asp30, Asp78, Glu150, Asp152, Asp171, Asp173, Asp225, and Asp270. An interaction with MSH3 region spans residues 129-387 (MAHKVIKAAR…RPESGTVSDA (259 aa)). Positions 138–229 (RSQGVDCLVA…ILSGCDYLSS (92 aa)) are I-domain. A disordered region spans residues 372–396 (HRNYSPRPESGTVSDAPQLKENPST). Ser376 is subject to Phosphoserine. The span at 382–396 (GTVSDAPQLKENPST) shows a compositional bias: polar residues. Residues 388–490 (PQLKENPSTV…NKFATFLQRK (103 aa)) form an interaction with MLH1 region. Residues 418–421 (KRPR) carry the Nuclear localization signal motif. Residues Ser422 and Ser454 each carry the phosphoserine modification. An N6-acetyllysine modification is found at Lys482. Thr581 bears the Phosphothreonine mark. Phosphoserine is present on residues Ser598 and Ser610. The interaction with MSH2 stretch occupies residues 600–846 (PTLGTLRSCF…CGRVQRAIFQ (247 aa)). Residues 618–781 (FSRTPSPSPS…SIQKRKHHNA (164 aa)) are disordered. Composition is skewed to polar residues over residues 620–631 (RTPSPSPSTALQ) and 639–654 (SPTSLPENNMSDVSQL). Thr621 is subject to Phosphothreonine. Ser623, Ser639, Ser660, and Ser674 each carry phosphoserine. Over residues 655 to 671 (KSEESSDDESHPLREEA) the composition is skewed to basic and acidic residues. Polar residues-rich tracts occupy residues 672-689 (CSSQSQESGEFSLQSSNA), 713-722 (DSQSDQTSKL), and 743-754 (KSSSADSLSTTK). At Ser714 the chain carries Phosphoserine; by ATR. Ser746 is subject to Phosphoserine. An interaction with MLH1 region spans residues 787-846 (LQIKLNELWKNFGFKKDSEKLPPCKKPLSPVRDNIQLTPEAEEDIFNKPECGRVQRAIFQ).

Belongs to the XPG/RAD2 endonuclease family. EXO1 subfamily. As to quaternary structure, interacts with the MLH1-PMS2 heterodimer via MLH1. Interacts with MSH3. Interacts with the MSH2-MSH6 heterodimer via MSH2, and this interaction may increase the processivity of the 5'-&gt;3' exonuclease activity. Interacts with PCNA, and this interaction may both stimulate the cryptic 3'-&gt;5' exonuclease activity and suppress the 5'-&gt;3' exonuclease activity. Interacts with WRN, and this interaction stimulates both the 5'-&gt;3' exonuclease activity and cleavage of 5'-overhanging flap structures. Interacts with RECQL/RECQ1, and this interaction stimulates cleavage of 5'-overhanging flap structures. Interacts with DNA helicase ZGRF1; the interaction is increased following DNA damage induction. The cofactor is Mg(2+). In terms of processing, phosphorylated upon DNA damage and in response to agents stalling DNA replication, probably by ATM or ATR. Phosphorylation at Ser-454, Thr-621 and Ser-714 is induced upon DNA-damage caused by treatment with hydroxyurea (HU) but not upon IR treatment. The HU-induced EXO1 triple phosphorylation facilitates destabilization/degradation of the protein. In terms of tissue distribution, highly expressed in bone marrow, testis and thymus. Expressed at lower levels in colon, lymph nodes, ovary, placenta, prostate, small intestine, spleen and stomach.

It is found in the nucleus. Its function is as follows. 5'-&gt;3' double-stranded DNA exonuclease which may also possess a cryptic 3'-&gt;5' double-stranded DNA exonuclease activity. Functions in DNA mismatch repair (MMR) to excise mismatch-containing DNA tracts directed by strand breaks located either 5' or 3' to the mismatch. Also exhibits endonuclease activity against 5'-overhanging flap structures similar to those generated by displacement synthesis when DNA polymerase encounters the 5'-end of a downstream Okazaki fragment. Required for somatic hypermutation (SHM) and class switch recombination (CSR) of immunoglobulin genes. Essential for male and female meiosis. The polypeptide is Exonuclease 1 (EXO1) (Homo sapiens (Human)).